The following is a 218-amino-acid chain: Embryonic polyadenylate-binding protein 2-B (218 aa).

2 disordered regions span residues 1–24 (MSER…ELDD) and 169–218 (RTNM…NNPY). An RRM domain is found at 93–170 (RSVYVGNVDY…RTIKVLPKRT (78 aa)). The span at 198 to 209 (QRPRGRPFRGRG) shows a compositional bias: basic residues.

As to quaternary structure, homodimer; Upon poly(A) binding, undergoes a dimer-monomer transition that removes the polyproline motif from the RNA recognition site and allows it to be replaced by the adenosine nucleotides of poly(A).

It localises to the cytoplasm. Binds the poly(A) tail of mRNA. Unable to interact with the cap-binding complex and is therefore unlikely to be involved in translation initiation. The protein is Embryonic polyadenylate-binding protein 2-B (Pabpn1l-b) of Xenopus laevis (African clawed frog).